A 338-amino-acid polypeptide reads, in one-letter code: tRNA pseudouridine synthase D (338 aa).

D79 serves as the catalytic Nucleophile. The TRUD domain occupies 154–303 (GVPNYFGEQR…EEAWRANILY (150 aa)).

This sequence belongs to the pseudouridine synthase TruD family.

It carries out the reaction uridine(13) in tRNA = pseudouridine(13) in tRNA. In terms of biological role, responsible for synthesis of pseudouridine from uracil-13 in transfer RNAs. The chain is tRNA pseudouridine synthase D from Legionella pneumophila (strain Lens).